The sequence spans 251 residues: Small ribosomal subunit protein uS2 (251 aa).

This sequence belongs to the universal ribosomal protein uS2 family.

This Deinococcus deserti (strain DSM 17065 / CIP 109153 / LMG 22923 / VCD115) protein is Small ribosomal subunit protein uS2.